The sequence spans 317 residues: MYDWLNALPKAELHLHLEGTLEPGLMFELARRNGVALPWPDVESLRRAYDYDNLQEFLDLYYRGAEVLRTEQDFYDLTWAYLLKCREQNVVHTEPFFDPQTHTDRGIAFETVLAGITQALEDGRTQLGIQGGLILSFLRHLPEEAAMRTLEQALPYRDAFIAVGLDSSERGFPPRLFQRVFERARAAGLPAVAHAGEEGPPEYIWEALDLLQVRRIDHGVRAAEDERLIERLIDTQIPLTVCPLSNTRLRVFDSMAEHNILELLERGVKVTVNSDDPAYFGGYITENFHALHEHLGMTQDQARRLAANSMDARLAGG.

Zn(2+) contacts are provided by histidine 14, histidine 16, and histidine 194. Residue glutamate 197 is the Proton donor of the active site. Residue aspartate 275 participates in Zn(2+) binding. Aspartate 276 serves as a coordination point for substrate.

The protein belongs to the metallo-dependent hydrolases superfamily. Adenosine and AMP deaminases family. Adenine deaminase type 2 subfamily. It depends on Zn(2+) as a cofactor.

It carries out the reaction adenine + H2O + H(+) = hypoxanthine + NH4(+). In terms of biological role, catalyzes the hydrolytic deamination of adenine to hypoxanthine. Plays an important role in the purine salvage pathway and in nitrogen catabolism. This Bordetella bronchiseptica (strain ATCC BAA-588 / NCTC 13252 / RB50) (Alcaligenes bronchisepticus) protein is Adenine deaminase.